Reading from the N-terminus, the 285-residue chain is Hydroxyethylthiazole kinase (285 aa).

Methionine 43 lines the substrate pocket. Residues lysine 119 and serine 172 each coordinate ATP. Glycine 199 lines the substrate pocket.

It belongs to the Thz kinase family. It depends on Mg(2+) as a cofactor.

It carries out the reaction 5-(2-hydroxyethyl)-4-methylthiazole + ATP = 4-methyl-5-(2-phosphooxyethyl)-thiazole + ADP + H(+). The protein operates within cofactor biosynthesis; thiamine diphosphate biosynthesis; 4-methyl-5-(2-phosphoethyl)-thiazole from 5-(2-hydroxyethyl)-4-methylthiazole: step 1/1. Its function is as follows. Catalyzes the phosphorylation of the hydroxyl group of 4-methyl-5-beta-hydroxyethylthiazole (THZ). The protein is Hydroxyethylthiazole kinase of Desulfovibrio desulfuricans (strain ATCC 27774 / DSM 6949 / MB).